The following is a 483-amino-acid chain: Keratin, type II cytoskeletal 8 (483 aa).

The span at 1 to 16 (MSIRVTQKSYKVSTSG) shows a compositional bias: polar residues. Positions 1-41 (MSIRVTQKSYKVSTSGPRAFSSRSYTSGPGSRISSSSFSRV) are disordered. The segment at 1–90 (MSIRVTQKSY…DPNIQAVRTQ (90 aa)) is head. Serine 9 bears the Phosphoserine; by PKC/PRKCE mark. Lysine 11 is covalently cross-linked (Glycyl lysine isopeptide (Lys-Gly) (interchain with G-Cter in SUMO2)). Residues serine 13, serine 15, serine 21, and serine 22 each carry the phosphoserine modification. At arginine 23 the chain carries Omega-N-methylarginine. Serine 24 bears the Phosphoserine; by PKC/PRKCE mark. Positions 24-41 (SYTSGPGSRISSSSFSRV) are enriched in low complexity. A Phosphothreonine modification is found at threonine 26. 2 positions are modified to phosphoserine: serine 27 and serine 31. Arginine 32 is subject to Omega-N-methylarginine. Phosphoserine occurs at positions 34, 37, and 39. At arginine 40 the chain carries Omega-N-methylarginine. Phosphoserine occurs at positions 43 and 44. Arginine 47 is modified (asymmetric dimethylarginine; alternate). An Omega-N-methylarginine; alternate modification is found at arginine 47. Position 74 is a phosphoserine; by MAPK (serine 74). Residues 91-126 (EKEQIKTLNNKFASFIDKVRFLEQQNKMLETKWSLL) are coil 1A. The 312-residue stretch at 91–402 (EKEQIKTLNN…KLLEGEESRL (312 aa)) folds into the IF rod domain. Lysine 101 carries the N6-malonyllysine modification. Residues lysine 122 and lysine 130 each participate in a glycyl lysine isopeptide (Lys-Gly) (interchain with G-Cter in SUMO2) cross-link. Residues 127-143 (QQQKTARSNMDNMFESY) form a linker 1 region. The segment at 144–235 (INNLRRQLET…QLYEEEIREL (92 aa)) is coil 1B. Lysine 197 participates in a covalent cross-link: Glycyl lysine isopeptide (Lys-Gly) (interchain with G-Cter in SUMO1); alternate. A Glycyl lysine isopeptide (Lys-Gly) (interchain with G-Cter in SUMO2); alternate cross-link involves residue lysine 197. Lysine 207 carries the post-translational modification N6-acetyllysine. Residue tyrosine 228 is modified to Phosphotyrosine. The segment at 236-259 (QSQISDTSVVLSMDNSRSLDMDSI) is linker 12. Serine 253 and serine 258 each carry phosphoserine. Residues 260–398 (IAEVKAQYED…ATYRKLLEGE (139 aa)) form a coil 2 region. A necessary for interaction with PNN region spans residues 261–382 (AEVKAQYEDI…EYQELMNVKL (122 aa)). A Glycyl lysine isopeptide (Lys-Gly) (interchain with G-Cter in SUMO2) cross-link involves residue lysine 264. The residue at position 274 (serine 274) is a Phosphoserine. Lysine 285 is covalently cross-linked (Glycyl lysine isopeptide (Lys-Gly) (interchain with G-Cter in SUMO2)). Serine 291 carries the post-translational modification Phosphoserine. Lysine 295 is covalently cross-linked (Glycyl lysine isopeptide (Lys-Gly) (interchain with G-Cter in SUMO2); alternate). Lysine 295 is modified (N6-acetyllysine; alternate). A Glycyl lysine isopeptide (Lys-Gly) (interchain with G-Cter in SUMO2) cross-link involves residue lysine 304. Residue lysine 325 forms a Glycyl lysine isopeptide (Lys-Gly) (interchain with G-Cter in SUMO2); alternate linkage. Lysine 325 carries the post-translational modification N6-acetyllysine; alternate. Position 330 is a phosphoserine (serine 330). Residue lysine 393 forms a Glycyl lysine isopeptide (Lys-Gly) (interchain with G-Cter in SUMO2) linkage. Positions 399–483 (ESRLESGMQN…VSESSDVLPK (85 aa)) are tail. Phosphoserine is present on residues serine 400, serine 404, serine 410, serine 417, and serine 424. Serine 432 is modified (phosphoserine; by CaMK2 and MAPK). Lysine 472 is covalently cross-linked (Glycyl lysine isopeptide (Lys-Gly) (interchain with G-Cter in SUMO1); alternate). A Glycyl lysine isopeptide (Lys-Gly) (interchain with G-Cter in SUMO2); alternate cross-link involves residue lysine 472. 3 positions are modified to phosphoserine: serine 475, serine 477, and serine 478.

This sequence belongs to the intermediate filament family. Heterotetramer of two type I and two type II keratins. Forms a heterodimer with KRT18. Associates with KRT20. Interacts with PLEC isoform 1C, when in a heterodimer with KRT18. Interacts with PNN. When associated with KRT19, interacts with DMD. Interacts with TCHP. Interacts with APEX1. Interacts with GPER1. Interacts with EPPK1. Interacts with PKP1 and PKP2. As to quaternary structure, (Microbial infection) Interacts with hepatitis C virus/HCV core protein. Phosphorylation on serine residues is enhanced during EGF stimulation and mitosis. Ser-74 phosphorylation plays an important role in keratin filament reorganization. Post-translationally, O-glycosylated. O-GlcNAcylation at multiple sites increases solubility, and decreases stability by inducing proteasomal degradation. In terms of processing, O-glycosylated (O-GlcNAcylated), in a cell cycle-dependent manner. As to expression, observed in muscle fibers accumulating in the costameres of myoplasm at the sarcolemma membrane in structures that contain dystrophin and spectrin. Expressed in gingival mucosa and hard palate of the oral cavity.

Its subcellular location is the cytoplasm. The protein localises to the nucleus. The protein resides in the nucleoplasm. It is found in the nucleus matrix. Together with KRT19, helps to link the contractile apparatus to dystrophin at the costameres of striated muscle. The protein is Keratin, type II cytoskeletal 8 (KRT8) of Homo sapiens (Human).